The sequence spans 532 residues: Cytochrome P450 714B2 (532 aa).

Over 1-2 (ME) the chain is Lumenal. The chain crosses the membrane as a helical; Signal-anchor for type III membrane protein span at residues 3–23 (VGMVVVVAAKVLVSLWCVGAC). The Cytoplasmic portion of the chain corresponds to 24-532 (CLAAYLYRVV…LTRVQGAYRH (509 aa)). Residue C474 coordinates heme.

It belongs to the cytochrome P450 family. Heme serves as cofactor. Highly expressed in shoot, spikelet and uppermost internode. Detected in roots, leaves and anthers.

The protein localises to the membrane. Catalyzes the 13-hydroxylation of gibberellins (GAs). Determines the ratio of GA4 and GA1. Converts GA12 into GA53. In Oryza sativa subsp. japonica (Rice), this protein is Cytochrome P450 714B2 (CYP714B2).